The chain runs to 867 residues: Leucine--tRNA ligase (867 aa).

The 'HIGH' region signature appears at 57 to 67 (PYPSGTLHMGH). Positions 308-327 (SQDERTSDDQPKRGVPTGAV) are disordered. The span at 309–319 (QDERTSDDQPK) shows a compositional bias: basic and acidic residues. The short motif at 631–635 (KMSKS) is the 'KMSKS' region element. Lysine 634 contacts ATP.

The protein belongs to the class-I aminoacyl-tRNA synthetase family.

It localises to the cytoplasm. It carries out the reaction tRNA(Leu) + L-leucine + ATP = L-leucyl-tRNA(Leu) + AMP + diphosphate. The protein is Leucine--tRNA ligase of Synechococcus sp. (strain CC9311).